The primary structure comprises 92 residues: MPRPGLKTRSKRRVYVRTPGGKVVIHYEPRKPGPARCAICGKPLNGVPRLIPSKLRKLAKTEKRPERPYGGYICPRCLSRLLRESIRASISS.

It belongs to the eukaryotic ribosomal protein eL34 family.

The protein is Large ribosomal subunit protein eL34 of Staphylothermus marinus (strain ATCC 43588 / DSM 3639 / JCM 9404 / F1).